An 854-amino-acid chain; its full sequence is SH2 domain-containing protein 3C (854 aa).

The residue at position 22 (Ser22) is a Phosphoserine. Residues 34–43 (RSSASASIRS) show a composition bias toward low complexity. The segment at 34-129 (RSSASASIRS…AKEAGEGTEA (96 aa)) is disordered. A compositionally biased stretch (basic and acidic residues) spans 99–124 (EVSRESHLVSRRLPEPPDLEAAKEAG). The SH2 domain occupies 215 to 314 (WYHGRIPREV…QSGAIIYCPV (100 aa)). Phosphotyrosine occurs at positions 273 and 278. Disordered stretches follow at residues 330–384 (SQGS…PRDS), 398–417 (LHSPLSPISESPSSPAYSTV), and 422–520 (APSA…ERQK). Residues 333–347 (SSKTASPASPSGSKG) are compositionally biased toward low complexity. Ser354 is modified (phosphoserine). 3 stretches are compositionally biased toward low complexity: residues 400 to 415 (SPLSPISESPSSPAYS), 422 to 436 (APSATPSTSAQPASP), and 474 to 485 (SPSPSLSSYSDP). Residue Ser435 is modified to Phosphoserine. Positions 508–520 (TPRKARGSGERQK) are enriched in basic and acidic residues. The Ras-GEF domain occupies 580–848 (DARTLARHVT…TALSHKLEPA (269 aa)). At Tyr787 the chain carries Phosphotyrosine.

As to quaternary structure, component of a complex comprised of SH2D3C, BCAR1/CAS, and CRK. Within the complex, interacts with CRK and (via C-terminus) with BCAR1/CAS (via C-terminus). Interacts with NEDD9/HEF1. Interacts with EPHB2. In terms of assembly, interacts with NEDD9/HEF1. Interacts with BCAR1/CAS. Interacts with PTK2B. Interacts (via C-terminus) with BCAR1/CAS (via C-terminus). Interacts with IGF1. Phosphorylated by MAPK/ERK upon T-cell receptor stimulation in T-cells. In terms of tissue distribution, expressed in the olfactory bulb and olfactory sensory neurons (at protein level). Expressed in B cells (at protein level). Expressed in T lymphocytes. Expressed in hematopoietic cells from spleen, lymph node and thymus (at protein level). Expressed weakly in the lung (at protein level). As to expression, expressed in the brain, lung, kidney, and weakly expressed in the liver and lung (at protein level).

The protein localises to the cytoplasm. It is found in the cell membrane. The protein resides in the cell projection. Its subcellular location is the axon. It localises to the ruffle membrane. In terms of biological role, acts as an adapter protein that mediates cell signaling pathways involved in cellular functions such as cell adhesion and migration, tissue organization, and the regulation of the immune response. Plays a role in integrin-mediated cell adhesion through BCAR1-CRK-RAPGEF1 signaling and activation of the small GTPase RAP1. Promotes cell migration and invasion through the extracellular matrix. Required for marginal zone B-cell development and thymus-independent type 2 immune responses. Mediates migration and adhesion of B cells in the splenic marginal zone via promoting hyperphosphorylation of NEDD9/CASL. Plays a role in CXCL13-induced chemotaxis of B-cells. Plays a role in the migration of olfactory sensory neurons (OSNs) into the forebrain and the innervation of the olfactory bulb by the OSN axons during development. Required for the efficient tyrosine phosphorylation of BCAR1 in OSN axons. Functionally, important regulator of chemokine-induced, integrin-mediated T lymphocyte adhesion and migration, acting upstream of RAP1. Required for tissue-specific adhesion of T lymphocytes to peripheral tissues. Required for basal and CXCL2 stimulated serine-threonine phosphorylation of NEDD9. May be involved in the regulation of T-cell receptor-mediated IL2 production through the activation of the JNK pathway in T-cells. Its function is as follows. May be involved in the BCAR1/CAS-mediated JNK activation pathway. The polypeptide is SH2 domain-containing protein 3C (Sh2d3c) (Mus musculus (Mouse)).